Reading from the N-terminus, the 905-residue chain is Phosphatidylethanolamine N-methyltransferase (905 aa).

Polar residues-rich tracts occupy residues 1–22 (MTNQ…STSV) and 40–58 (DSNG…SSLN). Residues 1-73 (MTNQIPSASS…SEPERYGCTP (73 aa)) are disordered. At 1 to 104 (MTNQIPSASS…DPRFSKTPWD (104 aa)) the chain is on the lumenal side. A helical membrane pass occupies residues 105-125 (WIVISSILAQVLLFFMTTGAV). Topologically, residues 126 to 128 (RRY) are cytoplasmic. Residues 129-149 (SMMLCFFFWRISYDAGIGFLL) traverse the membrane as a helical segment. Residues 150–209 (HMQSNHRKVVTWISDFGFFDKENHPKLYDLTKKQLISKMDSSYNYDTSPLEFNSWLVFRH) lie on the Lumenal side of the membrane. Residues 210-230 (FVDLILMCDFCSYILMGLAWT) traverse the membrane as a helical segment. Topologically, residues 231 to 236 (CWPKVN) are cytoplasmic. Residues 237-257 (IILQFLRIFGGIALIVFNYWV) traverse the membrane as a helical segment. Over 258–268 (KMDAHRVVRDY) the chain is Lumenal. Residues 269 to 289 (AWYWGDFFFLLRSSLVFNGVF) traverse the membrane as a helical segment. Over 290–313 (ELAPHPMYSVGYAGYYGMSLLTGS) the chain is Cytoplasmic. Residues 314 to 334 (YAVLFASILAHAAQFGFLLFV) traverse the membrane as a helical segment. At 335 to 379 (ENPHIERTYGTDINHARLSPRGEDNEFELPPEHDLVGFVNFDFTR) the chain is on the lumenal side. Ser353 carries the phosphoserine modification. Residues 380 to 400 (ISDVALLIIALYSIFIILLSS) form a helical membrane-spanning segment. The Cytoplasmic portion of the chain corresponds to 401 to 408 (NSHYSQFW). Residues 409–429 (AIFQAFVWRFLHSIIHAFILF) form a helical membrane-spanning segment. Over 430 to 456 (YQSKSKAWTKHFIRNGESAAYAWSQWK) the chain is Lumenal. A helical transmembrane segment spans residues 457 to 479 (GLYNLTLNMSYISFVMAAWKLYH). At 480–493 (LPSNWTYGLVSLRH) the chain is on the cytoplasmic side. A helical transmembrane segment spans residues 494–514 (ALGFGLIALHIYTSVSIYEDL). Residues 515–552 (GQYGWFYGDFFLPSRSPKLVYQGIYRYVNNPERFLGCS) are Lumenal-facing. A helical transmembrane segment spans residues 553 to 573 (AYWGLALISSSAWIFLIAILA). Residues 574–905 (QLSNLAIIRL…FDGPSGAKDD (332 aa)) are Cytoplasmic-facing.

The protein belongs to the class VI-like SAM-binding methyltransferase superfamily. CHO2 family.

The protein localises to the endoplasmic reticulum membrane. It catalyses the reaction a 1,2-diacyl-sn-glycero-3-phosphoethanolamine + S-adenosyl-L-methionine = a 1,2-diacyl-sn-glycero-3-phospho-N-methylethanolamine + S-adenosyl-L-homocysteine + H(+). It participates in phospholipid metabolism; phosphatidylcholine biosynthesis. Functionally, catalyzes the first step of the methylation pathway of phosphatidylcholine biosynthesis, the SAM-dependent methylation of phosphatidylethanolamine (PE) to phosphatidylmonomethylethanolamine (PMME). The chain is Phosphatidylethanolamine N-methyltransferase from Schizosaccharomyces pombe (strain 972 / ATCC 24843) (Fission yeast).